The sequence spans 150 residues: uncharacterized protein (150 aa).

This sequence to A.tumefaciens conjugal transfer protein TraB.

This is an uncharacterized protein from Agrobacterium tumefaciens (strain 15955).